We begin with the raw amino-acid sequence, 278 residues long: MDVRQSIHSEHAKTLDTQALRREFLIENIFVADEYTMVYSHIDRIIVGGIMPVSHSVEIGGEVGKQLGVSRLLDRRELGVINIGGAGAIIVDGQRHDIGHRDALYIGKGAKELVFVSNEASRPAKFYYNCAPAHTAYPTKKVSPADVAPVTLGDNLTSNRRTINKYFVPDVLETCQLSMGLTELAPGNLWNTMPCHTHERRMEVYLYFNMEEDSCVFHMMGQPQETRHIVMRNEQAVISPSWSIHSGVGTKAYTFIWGMVGENQVFDDMDHVAVQDLR.

The Zn(2+) site is built by H196, H198, E203, and H245.

This sequence belongs to the KduI family. Requires Zn(2+) as cofactor.

The enzyme catalyses 5-dehydro-4-deoxy-D-glucuronate = 3-deoxy-D-glycero-2,5-hexodiulosonate. Its pathway is glycan metabolism; pectin degradation; 2-dehydro-3-deoxy-D-gluconate from pectin: step 4/5. Catalyzes the isomerization of 5-dehydro-4-deoxy-D-glucuronate to 3-deoxy-D-glycero-2,5-hexodiulosonate. In Salmonella dublin (strain CT_02021853), this protein is 4-deoxy-L-threo-5-hexosulose-uronate ketol-isomerase.